A 224-amino-acid chain; its full sequence is Coiled-coil domain-containing protein 43 (224 aa).

Lys95 participates in a covalent cross-link: Glycyl lysine isopeptide (Lys-Gly) (interchain with G-Cter in SUMO1). 2 coiled-coil regions span residues 121–145 (SEEE…EDEA) and 177–218 (RKLE…KRTQ). Positions 138–149 (VTDEEDEADEKD) are enriched in acidic residues. 2 disordered regions span residues 138 to 157 (VTDE…TTMN) and 176 to 224 (ARKL…ERKR). Thr139 carries the phosphothreonine modification. Residues 176–211 (ARKLERDSLRDESQRKKEQDKLQRERDKLAKQERKE) are compositionally biased toward basic and acidic residues. A compositionally biased stretch (basic residues) spans 212 to 224 (KEKKRTQRGERKR).

Belongs to the CCDC43 family.

This is Coiled-coil domain-containing protein 43 (CCDC43) from Homo sapiens (Human).